A 783-amino-acid polypeptide reads, in one-letter code: MKAGIPLSRCTQRIPLLVARQVSRNITTTTTKFSLAPEYNHIRKVFDSQKYFNHFTKQGSHATLFSSPQTGLFHNEYLTTPQGLVDFSQQSLSQAKQLVSEMLSQVNTVDGKLKFIKKLDQLSDILCRVIDVAEFIRVVHPSVKWINAAQQTHEMMFEFMNQLNTNVELYSSLRDILNNPLITEQLTPEEIKVGEYLRQDFERSGIHMDPQTRENFVTITQEISLLGSQFGNQINGLKSYWCPVTVAEWESIEDPQLKKEIKNYQSKYDGIRQSETIQIPLVANIPYTILTNCSSDTLRKKVWVALHNSPDEQIETLNRFISYRALLSKMLNYKSFADYQLEHKMAKTPENVITFLFNLQKSLIKKGVVEELSQLSEIKHNGSGSASVNDIVNDIKPWDRDYLLARLQQRMQSEVSAGNVKEYFSVGTVIAGLNELFTRLYDISFVPMAALKGETWDSHQVRKIKVVDNAANKTLGFLYLDFWSTKVLPSHFTIVCSRRLNTSIGSETIEGMEKLVQLDEDYQLPVVSLVCNFASSGNFSFGRFAGVENEKPTLLTLDQVDTIFHEMGHAMHSMIGRTELHNLSGTRCSTDFVELPSVLMESFSKDPRVICQIGRHFDTDEKLPESLLGQAHEHRIMLDACETFMQSKMAMLDQKLHNEEMVNLLAKGLYEVDSTKVYHSVEKELKVFADEWSTWHGKFPHLFSYGAVYYSYLLDRAIADKIWQGLFAKDPWNGEAGKKYKESVLKWGGTRDPWECLADALGNDELKQGDSRAMEIIGQNSNL.

The transit peptide at 1 to 33 (MKAGIPLSRCTQRIPLLVARQVSRNITTTTTKF) directs the protein to the mitochondrion. His565 provides a ligand contact to Zn(2+). Glu566 is a catalytic residue. Residues His569 and His572 each coordinate Zn(2+).

The protein belongs to the peptidase M3 family. Requires Zn(2+) as cofactor.

It localises to the mitochondrion matrix. It carries out the reaction Release of an N-terminal octapeptide as second stage of processing of some proteins imported into the mitochondrion.. Functionally, cleaves proteins, imported into the mitochondrion, to their mature size. While most mitochondrial precursor proteins are processed to the mature form in one step by mitochondrial processing peptidase (MPP), the sequential cleavage by MIP of an octapeptide after initial processing by MPP is a required step for a subgroup of nuclear-encoded precursor proteins destined for the matrix or the inner membrane. This is Mitochondrial intermediate peptidase (OCT1) from Candida albicans (strain SC5314 / ATCC MYA-2876) (Yeast).